We begin with the raw amino-acid sequence, 172 residues long: Shikimate kinase (172 aa).

11–16 provides a ligand contact to ATP; sequence GAGKST. Ser15 serves as a coordination point for Mg(2+). Residues Asp33, Arg57, and Gly79 each coordinate substrate. Arg117 is a binding site for ATP. Arg136 is a binding site for substrate. Arg153 contributes to the ATP binding site.

Belongs to the shikimate kinase family. As to quaternary structure, monomer. Mg(2+) serves as cofactor.

Its subcellular location is the cytoplasm. It carries out the reaction shikimate + ATP = 3-phosphoshikimate + ADP + H(+). It participates in metabolic intermediate biosynthesis; chorismate biosynthesis; chorismate from D-erythrose 4-phosphate and phosphoenolpyruvate: step 5/7. In terms of biological role, catalyzes the specific phosphorylation of the 3-hydroxyl group of shikimic acid using ATP as a cosubstrate. This Pseudomonas paraeruginosa (strain DSM 24068 / PA7) (Pseudomonas aeruginosa (strain PA7)) protein is Shikimate kinase.